A 541-amino-acid polypeptide reads, in one-letter code: Glucose-6-phosphate isomerase (541 aa).

Glu-346 functions as the Proton donor in the catalytic mechanism. Catalysis depends on residues His-377 and Lys-506.

It belongs to the GPI family.

It is found in the cytoplasm. The enzyme catalyses alpha-D-glucose 6-phosphate = beta-D-fructose 6-phosphate. It participates in carbohydrate biosynthesis; gluconeogenesis. Its pathway is carbohydrate degradation; glycolysis; D-glyceraldehyde 3-phosphate and glycerone phosphate from D-glucose: step 2/4. Its function is as follows. Catalyzes the reversible isomerization of glucose-6-phosphate to fructose-6-phosphate. The polypeptide is Glucose-6-phosphate isomerase (Rhizobium etli (strain CIAT 652)).